Reading from the N-terminus, the 494-residue chain is Homeotic protein bicoid (494 aa).

3 disordered regions span residues 1–49, 149–210, and 263–293; these read MAQP…PPQF, RRRH…TAHM, and QQVHNHQQQLHHQGNHVPHQMQQQQQQAQQQ. A compositionally biased stretch (basic residues) spans 14-40; that stretch reads PLPHTHTHPHPHSHPHPHSHPHPHHQH. Residues 97-156 constitute a DNA-binding region (homeobox); that stretch reads PRRTRTTFTSSQIAELEQHFLQGRYLTAPRLADLSAKLALGTAQVKIWFKNRRRRHKIQS. The segment covering 154-163 has biased composition (basic and acidic residues); the sequence is IQSDQHKDQS. An RNA-binding region spans residues 433 to 440; the sequence is RGAAFAKF.

Belongs to the paired homeobox family. Bicoid subfamily. In terms of assembly, interacts with Bin1; in vitro and yeast cells. Interacts with bin3. Maternal expression is an anterior cap concentrated in the cortical cytoplasm. Its transcript is produced maternally and sequestered near the anterior pole of the mature oocyte. After egg deposition, it is translated into protein, which diffuses toward the posterior, forming a long-range anterior gradient.

The protein localises to the nucleus. Segment polarity transcription factor that provides positional cues for the development of head and thoracic segments. Forms a protein concentration gradient that patterns the anterior-posterior axis during embryogenesis and promotes the expression of anterior gap genes, such as hunchback (hb), ocelliless (oc), and buttonhead (btd). Binds to regulatory DNA sequences containing a 5'-TAATCC-3' sequence motif. Also binds RNA. Interacts with Bin1 to repress transcription of bicoid target genes in the anterior tip of the embryo; a process known as retraction. This is Homeotic protein bicoid from Drosophila melanogaster (Fruit fly).